The sequence spans 113 residues: U11-theraphotoxin-Hhn1q (113 aa).

An N-terminal signal peptide occupies residues 1–21 (MNTVRVTFLLVFVLAVSLGQA). Positions 22–74 (DKDENRMEMQEKTEQGKSYLDFAENLLLQKLEELEAKLLEEDSEESRNSRQKR) are excised as a propeptide. Residues 61–82 (EEDSEESRNSRQKRCIGEGVPC) are disordered. Intrachain disulfides connect Cys75–Cys90, Cys82–Cys95, and Cys89–Cys110.

Belongs to the neurotoxin 14 (magi-1) family. 01 (HNTX-16) subfamily. Expressed by the venom gland.

The protein localises to the secreted. Probable ion channel inhibitor. The chain is U11-theraphotoxin-Hhn1q from Cyriopagopus hainanus (Chinese bird spider).